We begin with the raw amino-acid sequence, 259 residues long: Ribosomal RNA small subunit methyltransferase A (259 aa).

S-adenosyl-L-methionine contacts are provided by asparagine 13, leucine 15, glycine 40, glutamate 61, aspartate 85, and asparagine 103.

This sequence belongs to the class I-like SAM-binding methyltransferase superfamily. rRNA adenine N(6)-methyltransferase family. RsmA subfamily.

The protein localises to the cytoplasm. The catalysed reaction is adenosine(1518)/adenosine(1519) in 16S rRNA + 4 S-adenosyl-L-methionine = N(6)-dimethyladenosine(1518)/N(6)-dimethyladenosine(1519) in 16S rRNA + 4 S-adenosyl-L-homocysteine + 4 H(+). Its function is as follows. Specifically dimethylates two adjacent adenosines (A1518 and A1519) in the loop of a conserved hairpin near the 3'-end of 16S rRNA in the 30S particle. May play a critical role in biogenesis of 30S subunits. This is Ribosomal RNA small subunit methyltransferase A from Neisseria gonorrhoeae (strain ATCC 700825 / FA 1090).